Reading from the N-terminus, the 70-residue chain is MLKQIFIGLVVFYQRFISPLKAPSCRFYPTCSHYSLQALEKYGPVKGLWLTAARVLKCHPFHPGGYDPVK.

The protein belongs to the UPF0161 family.

The protein localises to the cell inner membrane. Functionally, could be involved in insertion of integral membrane proteins into the membrane. In Geobacter sp. (strain M21), this protein is Putative membrane protein insertion efficiency factor.